The following is a 1234-amino-acid chain: Transcription-repair-coupling factor (1234 aa).

The 162-residue stretch at 663-824 (DMEKPIPMDR…LAGIREMSTI (162 aa)) folds into the Helicase ATP-binding domain. 676-683 (GDVGYGKT) serves as a coordination point for ATP. A DEEQ box motif is present at residues 777-780 (DEEQ). The 158-residue stretch at 842–999 (DDKQIAAALR…GMAVALKDLE (158 aa)) folds into the Helicase C-terminal domain. A disordered region spans residues 1207–1234 (RQHIGITNPSPPGEDGRGRNTTIKERQP). Residues 1220–1234 (EDGRGRNTTIKERQP) show a composition bias toward basic and acidic residues.

In the N-terminal section; belongs to the UvrB family. The protein in the C-terminal section; belongs to the helicase family. RecG subfamily.

Its subcellular location is the cytoplasm. Its function is as follows. Couples transcription and DNA repair by recognizing RNA polymerase (RNAP) stalled at DNA lesions. Mediates ATP-dependent release of RNAP and its truncated transcript from the DNA, and recruitment of nucleotide excision repair machinery to the damaged site. This Mycobacterium bovis (strain ATCC BAA-935 / AF2122/97) protein is Transcription-repair-coupling factor.